A 673-amino-acid polypeptide reads, in one-letter code: Potassium voltage-gated channel subfamily KQT member 1 (673 aa).

Disordered stretches follow at residues 1–28 (MAAA…RGSA) and 61–80 (GPSS…LGPR). Topologically, residues 1 to 118 (MAAATSPPRA…YNFLERPTGW (118 aa)) are cytoplasmic. A Phosphoserine modification is found at serine 27. Positions 66–75 (AAPAASPAAA) are enriched in low complexity. Residues 119–140 (KCFVYHFAVFLIVLVCLIFSVL) traverse the membrane as a helical segment. Residues 141 to 151 (STIEQYVALAT) are Extracellular-facing. A helical membrane pass occupies residues 152-174 (GTLFWMEIVLVVFFGTEYAVRLW). At 175–190 (SAGCRSKYVGIWGRLR) the chain is on the cytoplasmic side. The helical transmembrane segment at 191–216 (FARKPISIIDLIVVVASMVVLCVGSK) threads the bilayer. The Extracellular portion of the chain corresponds to 217–224 (GQVFATSA). A helical; Voltage-sensor transmembrane segment spans residues 225 to 240 (IRGIRFLQILRMLHVD). Positions 236–244 (MLHVDRQGG) are interaction with KCNE3. The Cytoplasmic portion of the chain corresponds to 241–258 (RQGGTWRLLGSVVFIHRQ). A 1,2-diacyl-sn-glycero-3-phospho-(1D-myo-inositol-4,5-bisphosphate) is bound at residue glutamine 242. Residues 259-281 (ELITTLYIGFLGLIFSSYFVYLA) form a helical membrane-spanning segment. At 282-297 (EKDAVNESGQVEFGSY) the chain is on the extracellular side. Asparagine 287 carries N-linked (GlcNAc...) asparagine glycosylation. Positions 298–318 (ADALWWGVVTVTTIGYGDKVP) form an intramembrane region, pore-forming. Residues 319 to 320 (QT) are Extracellular-facing. A helical membrane pass occupies residues 321 to 346 (WVGKTIASCFSVFAISFFALPAGILG). Over 347–673 (SGFALKVQQK…VPGRGPEEGS (327 aa)) the chain is Cytoplasmic. Positions 368–380 (AAASLIQTAWRCY) are interaction with CALM. Phosphoserine occurs at positions 405 and 407. Residues 514-528 (KVIRRMQYFVAKKKF) are interaction with CALM; calcium-dependent. The tract at residues 534 to 571 (PYDVRDVIEQYSQGHLNLMVRIKELQRRLDQSIGRPAL) is interaction with KCNE1 C-terminus. The interval 587–615 (IGARLNRVEDKVTQLDQRLELITDMLQQL) is interaction with AKAP9. The C-terminal assembly domain (tetramerization) stretch occupies residues 588–619 (GARLNRVEDKVTQLDQRLELITDMLQQLLSLH). The interval 619 to 673 (HRGGTPGSRAPGGGGAQVAQPCSGGSINPELFLPSNALPTYEQLTVPGRGPEEGS) is disordered. Residues 622 to 634 (GTPGSRAPGGGGA) show a composition bias toward gly residues.

It belongs to the potassium channel family. KQT (TC 1.A.1.15) subfamily. Kv7.1/KCNQ1 sub-subfamily. As to quaternary structure, tetramer. Heterotetramer with KCNE1; targets to the membrane raft. Interacts (via C-terminus) with CALM; forms a heterooctameric structure (with 4:4 KCNQ1:CALM stoichiometry) in a calcium-independent manner. Interacts with AKAP9; targets protein kinase A (PKA) catalytic and regulatory subunits and protein phosphatase 1 (PP1) to the KCNQ1-KCNE1 complex, allowing PKA-mediated phosphorylation and increase of delayed rectifier potassium channel activity. Interacts with KCNE2; form a heterooligomer complex that targets to the membrane raft and leading to currents with an apparently instantaneous activation, a rapid deactivation process and a linear current-voltage relationship and decreases the amplitude of the outward current. Interacts with AP2M1; mediates estrogen-induced internalization via clathrin-coated vesicles. Interacts with NEDD4L; promotes internalization and decreases I(Ks) currents. Interacts with USP2; counteracts the NEDD4L-specific down-regulation of I(Ks) and restore plasma membrane localization. Heterotetramer with KCNQ5; has a voltage-gated potassium channel activity. Interacts with KCNE3; four KCNE3 molecules are bound to one KCNQ1 tetramer (4:4 KCNQ1:KCNE3 stoichiometry); alters membrane raft localization; affects KCNQ1 structure and gating properties. Interacts with KCNE4; impairs KCNQ1 localization in lipid rafts and inhibits voltage-gated potassium channel activity. Interacts with KCNE5; impairs KCNQ1 localization in lipid rafts and only conducts current upon strong and continued depolarization. Interacts with SLC5A3; forms coregulatory channel-transporter complexes that modulate Na(+)-coupled myo-inositol influx through the transporter. In terms of processing, ubiquitinated by NEDD4L; promotes internalization. The ubiquitinylated form is internalized through a clathrin-mediated endocytosis by interacting with AP2M1 and is recycled back to the cell membrane via RAB4A and RAB11A. Post-translationally, deubiquitinated by USP2; counteracts the NEDD4L-specific down-regulation of I(Ks) and restores the membrane localization.

The protein resides in the cell membrane. Its subcellular location is the cytoplasmic vesicle membrane. The protein localises to the early endosome. It is found in the membrane raft. It localises to the endoplasmic reticulum. The protein resides in the basolateral cell membrane. Its subcellular location is the apical cell membrane. The enzyme catalyses K(+)(in) = K(+)(out). With respect to regulation, PIP2 molecule is essential to activate KCNQ channels by inducing the coupling of the voltage-sensing domain (VSD) and the pore-forming domain (PD). Upon channel activation, PIP2 disrupts the VSD-calmodulin/CALM interactions, causing the release of CALM from the VSD which triggers the opening of the gate. Calcium potentiates KCNQ1 channel current through calcium-bound CALM. Calcium-bound CALM competes with PIP2 to stabilize the channel open state. Pore-forming subunit of the voltage-gated potassium (Kv) channel involved in the regulation of cardiomyocyte excitability and important in normal development and functions of myocardium, inner ear, stomach and colon. Associates with KCNE beta subunits that modulates current kinetics. Induces a voltage-dependent by rapidly activating and slowly deactivating potassium-selective outward current. Also promotes a delayed voltage activated potassium current showing outward rectification characteristic. During beta-adrenergic receptor stimulation participates in cardiac repolarization by associating with KCNE1 to form the I(Ks) cardiac potassium current that increases the amplitude and slows down the activation kinetics of outward potassium current I(Ks). Muscarinic agonist oxotremorine-M strongly suppresses KCNQ1/KCNE1 current. When associated with KCNE3, forms the potassium channel that is important for cyclic AMP-stimulated intestinal secretion of chloride ions. This interaction with KCNE3 is reduced by 17beta-estradiol, resulting in the reduction of currents. During conditions of increased substrate load, maintains the driving force for proximal tubular and intestinal sodium ions absorption, gastric acid secretion, and cAMP-induced jejunal chloride ions secretion. Allows the provision of potassium ions to the luminal membrane of the secretory canaliculus in the resting state as well as during stimulated acid secretion. When associated with KCNE2, forms a heterooligomer complex leading to currents with an apparently instantaneous activation, a rapid deactivation process and a linear current-voltage relationship and decreases the amplitude of the outward current. When associated with KCNE4, inhibits voltage-gated potassium channel activity. When associated with KCNE5, this complex only conducts current upon strong and continued depolarization. Also forms a heterotetramer with KCNQ5 that has a voltage-gated potassium channel activity. Binds with phosphatidylinositol 4,5-bisphosphate. KCNQ1-KCNE2 channel associates with Na(+)-coupled myo-inositol symporter in the apical membrane of choroid plexus epithelium and regulates the myo-inositol gradient between blood and cerebrospinal fluid with an impact on neuron excitability. This chain is Potassium voltage-gated channel subfamily KQT member 1, found in Sus scrofa (Pig).